The chain runs to 557 residues: Organic cation/carnitine transporter 2 (557 aa).

Residues 1–20 (MRDYDEVTAFLGEWGPFQRL) are Cytoplasmic-facing. The helical transmembrane segment at 21-41 (IFFLLSASIIPNGFTGLSSVF) threads the bilayer. Residues 42 to 142 (LIATPEHRCR…NLVCEDDWKA (101 aa)) lie on the Extracellular side of the membrane. 3 N-linked (GlcNAc...) asparagine glycosylation sites follow: N57, N64, and N91. The helical transmembrane segment at 143–163 (PLTISLFFVGVLLGSFISGQL) threads the bilayer. Residues 164-172 (SDRFGRKNV) lie on the Cytoplasmic side of the membrane. The chain crosses the membrane as a helical span at residues 173–193 (LFVTMGMQTGFSFLQIFSKNF). The Extracellular portion of the chain corresponds to 194–197 (EMFV). A helical membrane pass occupies residues 198–218 (VLFVLVGMGQISNYVAAFVLG). 218–225 (GTEILGKS) contributes to the ATP binding site. The Cytoplasmic segment spans residues 219–232 (TEILGKSVRIIFST). The chain crosses the membrane as a helical span at residues 233–253 (LGVCIFYAFGYMVLPLFAYFI). Topologically, residues 254-257 (RDWR) are extracellular. Residues 258 to 278 (MLLVALTMPGVLCVALWWFIP) traverse the membrane as a helical segment. At 279-341 (ESPRWLISQG…LDLLRTWNIR (63 aa)) the chain is on the cytoplasmic side. Residues 342 to 362 (MVTIMSIMLWMTISVGYFGLS) form a helical membrane-spanning segment. Residues 363 to 373 (LDTPNLHGDIF) are Extracellular-facing. Residues 374-394 (VNCFLSAMVEVPAYVLAWLLL) form a helical membrane-spanning segment. The Cytoplasmic portion of the chain corresponds to 395 to 406 (QYLPRRYSMATA). Residues 407–427 (LFLGGSVLLFMQLVPPDLYYL) traverse the membrane as a helical segment. The Extracellular portion of the chain corresponds to 428-430 (ATV). Residues 431–451 (LVMVGKFGVTAAFSMVYVYTA) form a helical membrane-spanning segment. Topologically, residues 452–462 (ELYPTVVRNMG) are cytoplasmic. A helical transmembrane segment spans residues 463 to 483 (VGVSSTASRLGSILSPYFVYL). Residues 484 to 488 (GAYDR) are Extracellular-facing. Phosphotyrosine is present on Y486. The chain crosses the membrane as a helical span at residues 489 to 509 (FLPYILMGSLTILTAILTLFL). The tract at residues 535–557 (TPSHTRMLKDGQERPTILKSTAF) is disordered. Phosphothreonine is present on T550.

Belongs to the major facilitator (TC 2.A.1) superfamily. Organic cation transporter (TC 2.A.1.19) family. As to quaternary structure, interacts with PDZK1. Glycosylated. Glycosylation affects the expression levels. In terms of processing, not glycosylated. As to expression, strongly expressed in kidney, skeletal muscle, heart and placenta. Primarily expressed by surface epithelial cells of the colon (at protein level). Expressed in CD68 macrophage and CD43 T-cells but not in CD20 B-cells. In testis, localized to Sertoli cell basal membranes, peritubular myoid cells and Leydig cells.

Its subcellular location is the cell membrane. It is found in the apical cell membrane. It localises to the basal cell membrane. The protein resides in the endoplasmic reticulum. It carries out the reaction (R)-carnitine(out) + Na(+)(out) = (R)-carnitine(in) + Na(+)(in). The catalysed reaction is glycine betaine(out) + Na(+)(out) = glycine betaine(in) + Na(+)(in). The enzyme catalyses glycine betaine(out) + (R)-carnitine(in) = glycine betaine(in) + (R)-carnitine(out). It catalyses the reaction O-butanoyl-(R)-carnitine(out) + Na(+)(out) = O-butanoyl-(R)-carnitine(in) + Na(+)(in). It carries out the reaction O-acetyl-(R)-carnitine(out) + Na(+)(out) = O-acetyl-(R)-carnitine(in) + Na(+)(in). The catalysed reaction is O-propanoyl-(R)-carnitine(out) + Na(+)(out) = O-propanoyl-(R)-carnitine(in) + Na(+)(in). The enzyme catalyses (S)-carnitine(out) + Na(+)(out) = (S)-carnitine(in) + Na(+)(in). It catalyses the reaction an O-acyl-(R)-carnitine(out) + Na(+)(out) = an O-acyl-(R)-carnitine(in) + Na(+)(in). It carries out the reaction L-glutamyl-L-arginyl-glycyl-L-methionyl-L-threonine(out) + Na(+)(out) = L-glutamyl-L-arginyl-glycyl-L-methionyl-L-threonine(in) + Na(+)(in). The catalysed reaction is N,N-dimethylglycine(out) + Na(+)(out) = N,N-dimethylglycine(in) + Na(+)(in). Inhibited by emetine, quinidine and verapamil. The IC(50) of emetine is 4.2 uM. Not inhibited by valproic acid. Transport of (R)-carnitine is stimulated by cholesterol in the plasma membrane. Sodium-ion dependent, high affinity carnitine transporter. Involved in the active cellular uptake of carnitine. Transports one sodium ion with one molecule of carnitine. Also transports organic cations such as tetraethylammonium (TEA) without the involvement of sodium. Relative uptake activity ratio of carnitine to TEA is 11.3. In intestinal epithelia, transports the quorum-sensing pentapeptide CSF (competence and sporulation factor) from B.subtilis which induces cytoprotective heat shock proteins contributing to intestinal homeostasis. May also contribute to regulate the transport of organic compounds in testis across the blood-testis-barrier. Functionally, retained in the ER, unable to perform carnitine uptake. The sequence is that of Organic cation/carnitine transporter 2 from Homo sapiens (Human).